Here is a 1863-residue protein sequence, read N- to C-terminus: E3 ubiquitin-protein ligase ubr3 (1863 aa).

A UBR-type zinc finger spans residues 80–151 (TLCGLVWTAN…ESGFCNRHRL (72 aa)). 3 disordered regions span residues 302–330 (LDDS…SSTK), 970–995 (PEVE…SATF), and 1128–1152 (IPPK…RARE). Basic and acidic residues-rich tracts occupy residues 971-984 (EVER…ERET) and 1134-1152 (SPGD…RARE). The segment at 1270–1328 (DSSCLQSVSIGWDGGVYVQTCGHTLHIDCHKSYMESLRNDQVLQGISVDKGEFTCPLCR) adopts an RING-type; degenerate zinc-finger fold.

This sequence belongs to the E3 ubiquitin-protein ligase UBR1-like family.

It carries out the reaction S-ubiquitinyl-[E2 ubiquitin-conjugating enzyme]-L-cysteine + [acceptor protein]-L-lysine = [E2 ubiquitin-conjugating enzyme]-L-cysteine + N(6)-ubiquitinyl-[acceptor protein]-L-lysine.. It functions in the pathway protein modification; protein ubiquitination. Functionally, E3 ubiquitin-protein ligase which is a component of the N-end rule pathway. Recognizes and binds to proteins bearing specific N-terminal residues, leading to their ubiquitination and subsequent degradation. Positively regulates hedgehog/shh-signaling pathways that function in eye development, neuronal specification and somite development. Activation of shh up-regulates transcription of ubr3, which in turn promotes hedgehog/shh signaling possibly by controlling negative regulators such as Kif7. The chain is E3 ubiquitin-protein ligase ubr3 from Danio rerio (Zebrafish).